The primary structure comprises 587 residues: Arginine--tRNA ligase (587 aa).

A 'HIGH' region motif is present at residues 126-136 (ANPTGPLHVGH).

Belongs to the class-I aminoacyl-tRNA synthetase family. Monomer.

The protein localises to the cytoplasm. It carries out the reaction tRNA(Arg) + L-arginine + ATP = L-arginyl-tRNA(Arg) + AMP + diphosphate. This is Arginine--tRNA ligase from Azoarcus sp. (strain BH72).